Consider the following 223-residue polypeptide: Sugar fermentation stimulation protein homolog (223 aa).

This sequence belongs to the SfsA family.

The polypeptide is Sugar fermentation stimulation protein homolog (Thermosipho melanesiensis (strain DSM 12029 / CIP 104789 / BI429)).